The primary structure comprises 204 residues: Casparian strip membrane protein 2 (204 aa).

At methionine 1–glycine 42 the chain is on the cytoplasmic side. Residues leucine 43–alanine 63 form a helical membrane-spanning segment. Over threonine 64 to glutamine 92 the chain is Extracellular. Residues phenylalanine 93–valine 113 form a helical membrane-spanning segment. At valine 114–arginine 125 the chain is on the cytoplasmic side. Residues leucine 126–alanine 146 form a helical membrane-spanning segment. At alanine 147–glycine 178 the chain is on the extracellular side. Residues alanine 179 to valine 199 traverse the membrane as a helical segment. At alanine 200–histidine 204 the chain is on the cytoplasmic side.

This sequence belongs to the Casparian strip membrane proteins (CASP) family. As to quaternary structure, homodimer and heterodimers with other CASP proteins. Interacts with CASP1, CASP3 and CASP4.

The protein localises to the cell membrane. Regulates membrane-cell wall junctions and localized cell wall deposition. Required for establishment of the Casparian strip membrane domain (CSD) and the subsequent formation of Casparian strips, a cell wall modification of the root endodermis that determines an apoplastic barrier between the intraorganismal apoplasm and the extraorganismal apoplasm and prevents lateral diffusion. The chain is Casparian strip membrane protein 2 (CASP2) from Arabidopsis thaliana (Mouse-ear cress).